The sequence spans 365 residues: Eukaryotic translation initiation factor 3 subunit H (365 aa).

The region spanning 11–160 (VKVEALVVMK…LRAFRLSPKF (150 aa)) is the MPN domain.

This sequence belongs to the eIF-3 subunit H family. In terms of assembly, component of the eukaryotic translation initiation factor 3 (eIF-3) complex.

It is found in the cytoplasm. In terms of biological role, component of the eukaryotic translation initiation factor 3 (eIF-3) complex, which is involved in protein synthesis of a specialized repertoire of mRNAs and, together with other initiation factors, stimulates binding of mRNA and methionyl-tRNAi to the 40S ribosome. The eIF-3 complex specifically targets and initiates translation of a subset of mRNAs involved in cell proliferation. The chain is Eukaryotic translation initiation factor 3 subunit H from Aspergillus niger (strain ATCC MYA-4892 / CBS 513.88 / FGSC A1513).